A 108-amino-acid chain; its full sequence is uncharacterized protein (108 aa).

The segment covering 1–14 (MSDSNSRLVYSTET) has biased composition (polar residues). Residues 1-31 (MSDSNSRLVYSTETGRIDEPKAAPVRPKGDG) form a disordered region. Residues 15 to 31 (GRIDEPKAAPVRPKGDG) are compositionally biased toward basic and acidic residues.

Belongs to the SUI1 family.

This is an uncharacterized protein from Escherichia coli (strain K12).